The following is a 1147-amino-acid chain: MSTGPGKKAIRNAGGVGGGAGPSAGGPRGPAGQAVKFARRTSSGRYVSLSREDIDMEGELAADYTNYTVQIPPTPDNQPMLNGAEPASVAMKAEEQYVSNSLFTGGFNSATRAHLMDKVIESSVSHPQMAGAKGSRCAMPACDGSAMRNERGEDVDPCECHFKICRDCYLDAQKDGCICPGCKEHYKIGEYADDDPHDGKLHLPGPGGGGNKSLLARNQNGEFDHNRWLFESSGTYGYGNAFWPKGGMYDDDLDDDVDKLGGDGGGGGGGGPLPEQKPFKPLTRKIPMPTSVISPYRIFIVIRMFVLLFYLTWRIRNPNMEALWLWGMSIVCELWFAFSWLLDMLPKVNPVNRSTDLAVLKEKFETPSPSNPHGRSDLPGLDVFVSTADPEKEPVLTTATTILSILAVDYPVEKLACYVSDDGGALLTFEAMAEAASFANVWVPFCKKHDIEPRNPDSYFSVKGDPTKGKRRNDFVKDRRRVKREFDEFKVRINGLPDSIRRRSDAFNAREDMKMLKHLRETGADPSEQPKVKKATWMADGSHWPGTWAASAPDHAKGNHAGILQVMLKPPSPDPLYGMHDDDQMIDFSDVDIRLPMLVYMSREKRPGYDHNKKAGAMNALVRCSAVMSNGPFMLNFDCDHYINNAQAVREAMCFFMDRGGERIAYIQFPQRFEGIDPSDRYANNNTVFFDGNMRALDGLQGPMYVGTGCMFRRFAVYGFDPPRTAEYTGWLFTKKKVTTFKDPESDTQTLKAEDFDAELTSHLVPRRFGNSSPFMASIPVAEFQARPLADHPAVLHGRPSGALTVPRPPLDPPTVAEAVSVISCWYEDKTEWGDRVGWIYGSVTEDVVTGYRMHNRGWRSVYCITKRDAFLGTAPINLTDRLHQVLRWATGSVEIFFSRNNAFLASRKLMLLQRISYLNVGIYPFTSIFLLVYCFIPALSLFSGFFIVQKLDIAFLCYLLTMTITLVALGILEVKWSGIELEDWWRNEQFWLISGTSAHLYAVVQGLLKVMAGIEISFTLTAKAAADDNEDIYADLYIVKWSSLLIPPITIGMVNIIAIAFAFARTIYSDNPRWGKFIGGGFFSFWVLAHLNPFAKGLMGRRGKTPTIVFVWSGLLSITVSLLWVAISPPEANSNGGARGGGFQFP.

2 disordered regions span residues M1–Q33 and K259–P281. Gly residues-rich tracts occupy residues G14–G29 and G262–P272. 2 helical membrane-spanning segments follow: residues V292–T312 and A322–L342. Catalysis depends on residues D422 and D847. 6 helical membrane passes run I929–V949, I954–E974, L1001–L1021, L1045–A1065, W1075–F1095, and T1108–I1128.

This sequence belongs to the glycosyltransferase 2 family. Plant cellulose synthase-like D subfamily.

It is found in the golgi apparatus membrane. Thought to be a Golgi-localized beta-glycan synthase that polymerize the backbones of noncellulosic polysaccharides (hemicelluloses) of plant cell wall. This chain is Cellulose synthase-like protein D3 (CSLD3), found in Oryza sativa subsp. japonica (Rice).